A 531-amino-acid chain; its full sequence is MALDAFFFIVSLFLLFPSPSASESTTQFCSAGRENGVGSCGVSSTRILIKGGTVVNAHHQELADVYVENGIIVAVQPNIKVGDEVTVLDATGKFVMPGGIDPHTHLAMEFMGTETIDDFFSGQAAALAGGTTMHIDFVIPVNGNLVAGFEAYENKSRESCMDYGFHMAITKWDEGVSRDMEMLVKEKGINSFKFFLAYKGSLMVTDDLLLEGLKRCKSLGALAMVHAENGDAVFEGQKRMIELGITGPEGHALSRPPVLEGEATARAIRLARFINTPLYVVHVMSVDAMDEIAKARKSGQKVIGEPVVSGLILDDHWLWDPDFTIASKYVMSPPIRPVGHGKALQDALSTGILQLVGTDHCTFNSTQKALGLDDFRRIPNGVNGLEERMHLIWDTMVESGQLSATDYVRITSTECARIFNIYPRKGAILAGSDADIIILNPNSSYEISSKSHHSRSDTNVYEGRRGKGKVEVTIAGGRIVWENEELKVVPRSGKYIEMPPFSYLFDGIEKSDANYLSSLRAPVKRVRTEAT.

His-103, His-105, and Lys-193 together coordinate Zn(2+). N6-carboxylysine is present on Lys-193. Tyr-198 is a binding site for substrate. Residues His-226 and His-282 each coordinate Zn(2+). Ser-332 contacts substrate. Residue Asp-359 participates in Zn(2+) binding. Position 380 (Asn-380) interacts with substrate.

It belongs to the metallo-dependent hydrolases superfamily. Hydantoinase/dihydropyrimidinase family. Homotetramer. Zn(2+) is required as a cofactor. Post-translationally, carboxylation allows a single lysine to coordinate two zinc ions.

The protein localises to the endoplasmic reticulum. The catalysed reaction is 5,6-dihydrouracil + H2O = 3-(carbamoylamino)propanoate + H(+). Its pathway is amino-acid biosynthesis; beta-alanine biosynthesis. Its function is as follows. Catalyzes the second step of the reductive pyrimidine degradation, the reversible hydrolytic ring opening of dihydropyrimidines. Can catalyze the ring opening of 5,6-dihydrouracil to N-carbamoyl-alanine and of 5,6-dihydrothymine to N-carbamoyl-amino isobutyrate. Involved in the recycling of nitrogen from nucleobases to general nitrogen metabolism. The sequence is that of Dihydropyrimidinase from Arabidopsis thaliana (Mouse-ear cress).